Reading from the N-terminus, the 461-residue chain is tRNA modification GTPase MnmE (461 aa).

Residues R23, E84, and K123 each coordinate (6S)-5-formyl-5,6,7,8-tetrahydrofolate. One can recognise a TrmE-type G domain in the interval 219 to 382 (GVQVVIGGRP…LLDHLTDTVA (164 aa)). Residues 229 to 234 (NAGKST), 248 to 254 (SETPGTT), 273 to 276 (DTAG), and 337 to 340 (NKAD) contribute to the GTP site. Positions 233 and 254 each coordinate Mg(2+). Residue K461 participates in (6S)-5-formyl-5,6,7,8-tetrahydrofolate binding.

This sequence belongs to the TRAFAC class TrmE-Era-EngA-EngB-Septin-like GTPase superfamily. TrmE GTPase family. In terms of assembly, homodimer. Heterotetramer of two MnmE and two MnmG subunits. The cofactor is K(+).

Its subcellular location is the cytoplasm. Functionally, exhibits a very high intrinsic GTPase hydrolysis rate. Involved in the addition of a carboxymethylaminomethyl (cmnm) group at the wobble position (U34) of certain tRNAs, forming tRNA-cmnm(5)s(2)U34. The protein is tRNA modification GTPase MnmE of Salinibacter ruber (strain DSM 13855 / M31).